Reading from the N-terminus, the 419-residue chain is Tryptophan synthase beta chain (419 aa).

An N6-(pyridoxal phosphate)lysine modification is found at Lys113.

It belongs to the TrpB family. Tetramer of two alpha and two beta chains. Pyridoxal 5'-phosphate serves as cofactor.

The catalysed reaction is (1S,2R)-1-C-(indol-3-yl)glycerol 3-phosphate + L-serine = D-glyceraldehyde 3-phosphate + L-tryptophan + H2O. It participates in amino-acid biosynthesis; L-tryptophan biosynthesis; L-tryptophan from chorismate: step 5/5. The beta subunit is responsible for the synthesis of L-tryptophan from indole and L-serine. This Picrophilus torridus (strain ATCC 700027 / DSM 9790 / JCM 10055 / NBRC 100828 / KAW 2/3) protein is Tryptophan synthase beta chain.